The sequence spans 356 residues: S-adenosylmethionine:tRNA ribosyltransferase-isomerase (356 aa).

The protein belongs to the QueA family. In terms of assembly, monomer.

Its subcellular location is the cytoplasm. It carries out the reaction 7-aminomethyl-7-carbaguanosine(34) in tRNA + S-adenosyl-L-methionine = epoxyqueuosine(34) in tRNA + adenine + L-methionine + 2 H(+). Its pathway is tRNA modification; tRNA-queuosine biosynthesis. In terms of biological role, transfers and isomerizes the ribose moiety from AdoMet to the 7-aminomethyl group of 7-deazaguanine (preQ1-tRNA) to give epoxyqueuosine (oQ-tRNA). In Enterobacter sp. (strain 638), this protein is S-adenosylmethionine:tRNA ribosyltransferase-isomerase.